A 186-amino-acid polypeptide reads, in one-letter code: Dirigent protein 7 (186 aa).

The signal sequence occupies residues 1–21; sequence MAKLILIIVTQILLIAAVVSA. Asn-70, Asn-91, and Asn-126 each carry an N-linked (GlcNAc...) asparagine glycan.

This sequence belongs to the plant dirigent protein family. Homodimer.

Its subcellular location is the secreted. It is found in the extracellular space. The protein resides in the apoplast. Functionally, dirigent proteins impart stereoselectivity on the phenoxy radical-coupling reaction, yielding optically active lignans from two molecules of coniferyl alcohol in the biosynthesis of lignans, flavonolignans, and alkaloids and thus plays a central role in plant secondary metabolism. The polypeptide is Dirigent protein 7 (DIR7) (Arabidopsis thaliana (Mouse-ear cress)).